The primary structure comprises 171 residues: Large ribosomal subunit protein uL10 (171 aa).

The protein belongs to the universal ribosomal protein uL10 family. In terms of assembly, part of the ribosomal stalk of the 50S ribosomal subunit. The N-terminus interacts with L11 and the large rRNA to form the base of the stalk. The C-terminus forms an elongated spine to which L12 dimers bind in a sequential fashion forming a multimeric L10(L12)X complex.

In terms of biological role, forms part of the ribosomal stalk, playing a central role in the interaction of the ribosome with GTP-bound translation factors. This chain is Large ribosomal subunit protein uL10, found in Zymomonas mobilis subsp. mobilis (strain ATCC 31821 / ZM4 / CP4).